A 713-amino-acid chain; its full sequence is Polyribonucleotide nucleotidyltransferase (713 aa).

Positions 498 and 504 each coordinate Mg(2+). In terms of domain architecture, KH spans 565–631 (PRILSLKVPV…RIEDLTREAK (67 aa)). The S1 motif domain occupies 633–701 (GEIYEGTVTR…ERGKIDLIRP (69 aa)).

It belongs to the polyribonucleotide nucleotidyltransferase family. Mg(2+) is required as a cofactor.

It localises to the cytoplasm. It catalyses the reaction RNA(n+1) + phosphate = RNA(n) + a ribonucleoside 5'-diphosphate. Involved in mRNA degradation. Catalyzes the phosphorolysis of single-stranded polyribonucleotides processively in the 3'- to 5'-direction. This chain is Polyribonucleotide nucleotidyltransferase, found in Thermus thermophilus (strain ATCC 27634 / DSM 579 / HB8).